A 128-amino-acid chain; its full sequence is Sulfurtransferase TusD (128 aa).

Cys78 serves as the catalytic Cysteine persulfide intermediate.

Belongs to the DsrE/TusD family. As to quaternary structure, heterohexamer, formed by a dimer of trimers. The hexameric TusBCD complex contains 2 copies each of TusB, TusC and TusD. The TusBCD complex interacts with TusE.

It localises to the cytoplasm. Part of a sulfur-relay system required for 2-thiolation of 5-methylaminomethyl-2-thiouridine (mnm(5)s(2)U) at tRNA wobble positions. Accepts sulfur from TusA and transfers it in turn to TusE. The chain is Sulfurtransferase TusD from Shigella dysenteriae serotype 1 (strain Sd197).